Reading from the N-terminus, the 342-residue chain is Trace amine-associated receptor 8 (342 aa).

The Extracellular segment spans residues 1–31; that stretch reads MTSNFSQPVVQLCYEDVNGSCIETPYSPGSR. N-linked (GlcNAc...) asparagine glycans are attached at residues N4 and N18. 2 cysteine pairs are disulfide-bonded: C21–C185 and C104–C189. Residues 32 to 52 traverse the membrane as a helical segment; sequence VILYTAFSFGSLLAVFGNLLV. The Cytoplasmic segment spans residues 53–67; it reads MTSVLHFKQLHSPTN. The chain crosses the membrane as a helical span at residues 68 to 88; the sequence is FLIASLACADFLVGVTVMLFS. Topologically, residues 89-111 are extracellular; the sequence is MVRTVESCWYFGAKFCTLHSCCD. Residues 112 to 132 traverse the membrane as a helical segment; it reads VAFCYSSVLHLCFICIDRYIV. Residues 133–146 are Cytoplasmic-facing; that stretch reads VTDPLVYATKFTVS. A helical transmembrane segment spans residues 147-167; it reads VSGICISVSWILPLTYSGAVF. Residues 168 to 195 are Extracellular-facing; that stretch reads YTGVNDDGLEELVSALNCVGGCQIIVSQ. A helical membrane pass occupies residues 196–216; sequence GWVLIDFLLFFIPTLVMIILY. The Cytoplasmic segment spans residues 217-258; that stretch reads SKIFLIAKQQAIKIETTSSKVESSSESYKIRVAKRERKAAKT. A helical transmembrane segment spans residues 259–279; it reads LGVTVLAFVISWLPYTVDILI. Position 280 (D280) is a topological domain, extracellular. Residues 281 to 301 traverse the membrane as a helical segment; sequence AFMGFLTPAYIYEICCWSAYY. Residues 302–342 are Cytoplasmic-facing; sequence NSAMNPLIYALFYPWFRKAIKLILSGDVLKASSSTISLFLE.

Belongs to the G-protein coupled receptor 1 family. Expressed in kidney and amygdala. Not expressed in other tissues or brain regions tested.

The protein resides in the cell membrane. Its function is as follows. Olfactory receptor specific for trace amines. Trace amine compounds are enriched in animal body fluids and act on trace amine-associated receptors (TAARs) to elicit both intraspecific and interspecific innate behaviors. Ligand-binding causes a conformation change that triggers signaling via G alpha proteins, possibly G(i)/G(o) G alpha proteins. This chain is Trace amine-associated receptor 8 (TAAR8), found in Homo sapiens (Human).